We begin with the raw amino-acid sequence, 212 residues long: Ras-related protein RABC1 (212 aa).

Gly-2 carries the post-translational modification N-acetylglycine. Residue 20-27 participates in GTP binding; sequence GDSGVGKS. The short motif at 41–49 is the Effector region element; that stretch reads LSPTIGVDF. GTP is bound by residues 67 to 71, 127 to 130, and 157 to 158; these read DTAGQ, NKVD, and SA. The segment at 182–212 is disordered; it reads TAEGSSGGKKNIFKQNPAQTTSTSSSYCCSS. The segment covering 201–212 has biased composition (low complexity); sequence TTSTSSSYCCSS. Residues Cys-209 and Cys-210 are each lipidated (S-geranylgeranyl cysteine).

Belongs to the small GTPase superfamily. Rab family.

The protein localises to the cell membrane. Its function is as follows. Intracellular vesicle trafficking and protein transport. The chain is Ras-related protein RABC1 (RABC1) from Arabidopsis thaliana (Mouse-ear cress).